We begin with the raw amino-acid sequence, 64 residues long: Large ribosomal subunit protein bL32 (64 aa).

The interval 1-20 is disordered; the sequence is MALPKYKTSRANTHSRRANW.

It belongs to the bacterial ribosomal protein bL32 family.

This Bifidobacterium adolescentis (strain ATCC 15703 / DSM 20083 / NCTC 11814 / E194a) protein is Large ribosomal subunit protein bL32.